The primary structure comprises 311 residues: MLSLQTIAKMAVATNTYSKYHYPILKVFGLWWKNSTLNGPIKICNHCNNIMVGEYPMCYNHGMSLDIALIRAVKERNISLVQLFTEWGGNIDYGALCANTPSMQRLCKSLGAKPPKGRMYMDALIHLSDTLNDNDLIRGYEIFDDNSVLDCVNLIRLKIMLTLKARIPLMEQLDQIALKQLLQRYWYAMAVQHNLTTAIHYFDNHIPNIKPFSLRCALYFNDPFKIHDACRTVNMDPNEMMNIACQQDLNFQSIYYSYILGADINQAMLMSLKYGNLSNMWFCIDLGADAFKEAGALAGKKKKSVTAHIRS.

It belongs to the asfivirus MGF 360 family.

In terms of biological role, plays a role in virus cell tropism, and may be required for efficient virus replication in macrophages. The protein is Protein MGF 360-16R of African swine fever virus (strain Badajoz 1971 Vero-adapted) (Ba71V).